The sequence spans 88 residues: Early E1B 9 kDa protein (88 aa).

The tract at residues 23-88 (NMEGSQDEDN…DLFPELRRLP (66 aa)) is disordered. Positions 34–44 (RLLASAASGSS) are enriched in low complexity.

The sequence is that of Early E1B 9 kDa protein from Homo sapiens (Human).